Reading from the N-terminus, the 115-residue chain is T cell receptor delta variable 1 (115 aa).

The N-terminal stretch at 1 to 21 is a signal peptide; sequence MLFSSLLCVFVAFSYSGSSVA. The Ig-like domain maps to 22–115; it reads QKVTQAQSSV…SAKYFCALGE (94 aa). Residues Cys43 and Cys111 are joined by a disulfide bond.

As to quaternary structure, gamma-delta TR is a heterodimer composed of a gamma and delta chain; disulfide-linked. The gamma-delta TR is associated with the transmembrane signaling CD3 coreceptor proteins following the stoichiometry: a single gamma-delta TR heterodimer associates with one CD3D-CD3E heterodimer, one CD3G-CD3E heterodimer and one CD247 homodimer forming a stable octameric structure. Upon activation, gamma-delta TR complex associates with FCER1G to initiate intracellular signaling.

The protein resides in the cell membrane. In terms of biological role, v region of the variable domain of T cell receptor (TR) delta chain that participates in the antigen recognition. Gamma-delta TRs recognize a variety of self and foreign non-peptide antigens frequently expressed at the epithelial boundaries between the host and external environment, including endogenous lipids presented by MH-like protein CD1D and phosphoantigens presented by butyrophilin-like molecule BTN3A1. Upon antigen recognition induces rapid, innate-like immune responses involved in pathogen clearance and tissue repair. Binding of gamma-delta TR complex to antigen triggers phosphorylation of immunoreceptor tyrosine-based activation motifs (ITAMs) in the CD3 chains by the LCK and FYN kinases, allowing the recruitment, phosphorylation, and activation of ZAP70 that facilitates phosphorylation of the scaffolding proteins LCP2 and LAT. This lead to the formation of a supramolecular signalosome that recruits the phospholipase PLCG1, resulting in calcium mobilization and ERK activation, ultimately leading to T cell expansion and differentiation into effector cells. Gamma-delta TRs are produced through somatic rearrangement of a limited repertoire of variable (V), diversity (D), and joining (J) genes. The potential diversity of gamma-delta TRs is conferred by the unique ability to rearrange (D) genes in tandem and to utilize all three reading frames. The combinatorial diversity is considerably increased by the sequence exonuclease trimming and random nucleotide (N) region additions which occur during the V-(D)-J rearrangements. This Homo sapiens (Human) protein is T cell receptor delta variable 1.